The chain runs to 372 residues: Rab9 effector protein with kelch motifs (372 aa).

Kelch repeat units lie at residues 49–95 (KVFI…FIPS), 100–146 (RIWV…TSSA), 151–200 (QLYV…VMVA), 204–250 (KLFI…SAVA), and 254–303 (HVYI…IIPW). Serine 133 is modified (phosphoserine). The disordered stretch occupies residues 314 to 340 (SNSLTLNHEAEKEDSADKVMSHSGDSH). A compositionally biased stretch (basic and acidic residues) spans 321 to 340 (HEAEKEDSADKVMSHSGDSH).

Interacts with PIKFYVE; the interaction recruits RABEPK to the endosomal membrane. Interacts with RAB9 in its GTP-bound conformation. Post-translationally, phosphorylated on Ser residues by PIKFYVE.

Its subcellular location is the cytoplasm. The protein localises to the endosome membrane. Functionally, rab9 effector required for endosome to trans-Golgi network (TGN) transport. This Homo sapiens (Human) protein is Rab9 effector protein with kelch motifs.